The primary structure comprises 419 residues: Probable 3-isopropylmalate dehydratase large subunit (419 aa).

The [4Fe-4S] cluster site is built by Cys299, Cys359, and Cys362.

Belongs to the aconitase/IPM isomerase family. LeuC type 2 subfamily. In terms of assembly, heterodimer of LeuC and LeuD. Requires [4Fe-4S] cluster as cofactor.

It carries out the reaction (2R,3S)-3-isopropylmalate = (2S)-2-isopropylmalate. It functions in the pathway amino-acid biosynthesis; L-leucine biosynthesis; L-leucine from 3-methyl-2-oxobutanoate: step 2/4. In terms of biological role, catalyzes the isomerization between 2-isopropylmalate and 3-isopropylmalate, via the formation of 2-isopropylmaleate. The polypeptide is Probable 3-isopropylmalate dehydratase large subunit (Methanothermobacter thermautotrophicus (strain ATCC 29096 / DSM 1053 / JCM 10044 / NBRC 100330 / Delta H) (Methanobacterium thermoautotrophicum)).